Consider the following 334-residue polypeptide: Serine/Arginine-related protein 53 (334 aa).

Basic and acidic residues predominate over residues Met1–Arg13. Disordered regions lie at residues Met1 to Pro179, Asp198 to Ala220, and Arg246 to Thr290. Over residues Ser14–Ser24 the composition is skewed to basic residues. The segment covering Pro44–Tyr62 has biased composition (basic and acidic residues). A compositionally biased stretch (basic residues) spans Ser78–Ser118. Composition is skewed to basic and acidic residues over residues Arg132–Asp166, Asp198–Asp218, and Ser247–Glu256. A coiled-coil region spans residues Ala180–Glu236. The segment covering Ala265 to Ser278 has biased composition (low complexity).

Interacts (via Arg/Ser-rich domain) with LUC7L3, RBM39 and RSF1. In terms of processing, phosphorylated.

It is found in the nucleus. The protein resides in the nucleus speckle. The protein localises to the cytoplasm. In terms of biological role, plays a role in pre-mRNA splicing. Involved in both constitutive and alternative pre-mRNA splicing. May have a role in the recognition of the 3' splice site during the second step of splicing. This Mus musculus (Mouse) protein is Serine/Arginine-related protein 53 (Rsrc1).